The primary structure comprises 234 residues: Leucyl/phenylalanyl-tRNA--protein transferase (234 aa).

It belongs to the L/F-transferase family.

The protein localises to the cytoplasm. It carries out the reaction N-terminal L-lysyl-[protein] + L-leucyl-tRNA(Leu) = N-terminal L-leucyl-L-lysyl-[protein] + tRNA(Leu) + H(+). The catalysed reaction is N-terminal L-arginyl-[protein] + L-leucyl-tRNA(Leu) = N-terminal L-leucyl-L-arginyl-[protein] + tRNA(Leu) + H(+). It catalyses the reaction L-phenylalanyl-tRNA(Phe) + an N-terminal L-alpha-aminoacyl-[protein] = an N-terminal L-phenylalanyl-L-alpha-aminoacyl-[protein] + tRNA(Phe). Functionally, functions in the N-end rule pathway of protein degradation where it conjugates Leu, Phe and, less efficiently, Met from aminoacyl-tRNAs to the N-termini of proteins containing an N-terminal arginine or lysine. In Pseudoalteromonas atlantica (strain T6c / ATCC BAA-1087), this protein is Leucyl/phenylalanyl-tRNA--protein transferase.